A 129-amino-acid chain; its full sequence is Flagellar assembly factor FliW (129 aa).

Belongs to the FliW family. Interacts with flagellins FlaA and FlaB but not with FlaC; recognizes glycosylated and non-glycosylated FlaA equally. Interacts with CsrA. May form a 3-way complex of flagellin, FliS and FliW simultaneously in which FliS and FliW do not directly interact.

It localises to the cytoplasm. In terms of biological role, acts as an anti-CsrA protein, binds CsrA and prevents it from repressing translation of its target genes, one of which is flagellin. Binds to flagellin and participates in the assembly of the flagellum. Overexpression leads to increased levels of FlaA and FlaB, but levels of FlaC remain stable. Involved in post-transcriptional regulation of flagellin biosynthesis. The chain is Flagellar assembly factor FliW from Campylobacter jejuni subsp. jejuni serotype O:6 (strain 81116 / NCTC 11828).